Here is a 113-residue protein sequence, read N- to C-terminus: T cell receptor alpha variable 5 (113 aa).

The signal sequence occupies residues 1–22 (MKTFAGFSFLFLWLQLDCMSRG). An Ig-like domain is found at 23–113 (EDVEQSLFLS…DSAIYFCAES (91 aa)). Asn-42 carries N-linked (GlcNAc...) asparagine glycosylation. The cysteines at positions 43 and 110 are disulfide-linked.

Alpha-beta TR is a heterodimer composed of an alpha and beta chain; disulfide-linked. The alpha-beta TR is associated with the transmembrane signaling CD3 coreceptor proteins to form the TR-CD3 (TcR or TCR). The assembly of alpha-beta TR heterodimers with CD3 occurs in the endoplasmic reticulum where a single alpha-beta TR heterodimer associates with one CD3D-CD3E heterodimer, one CD3G-CD3E heterodimer and one CD247 homodimer forming a stable octameric structure. CD3D-CD3E and CD3G-CD3E heterodimers preferentially associate with TR alpha and TR beta chains, respectively. The association of the CD247 homodimer is the last step of TcR assembly in the endoplasmic reticulum and is required for transport to the cell surface.

The protein localises to the cell membrane. Functionally, v region of the variable domain of T cell receptor (TR) alpha chain that participates in the antigen recognition. Alpha-beta T cell receptors are antigen specific receptors which are essential to the immune response and are present on the cell surface of T lymphocytes. Recognize peptide-major histocompatibility (MH) (pMH) complexes that are displayed by antigen presenting cells (APC), a prerequisite for efficient T cell adaptive immunity against pathogens. Binding of alpha-beta TR to pMH complex initiates TR-CD3 clustering on the cell surface and intracellular activation of LCK that phosphorylates the ITAM motifs of CD3G, CD3D, CD3E and CD247 enabling the recruitment of ZAP70. In turn ZAP70 phosphorylates LAT, which recruits numerous signaling molecules to form the LAT signalosome. The LAT signalosome propagates signal branching to three major signaling pathways, the calcium, the mitogen-activated protein kinase (MAPK) kinase and the nuclear factor NF-kappa-B (NF-kB) pathways, leading to the mobilization of transcription factors that are critical for gene expression and essential for T cell growth and differentiation. The T cell repertoire is generated in the thymus, by V-(D)-J rearrangement. This repertoire is then shaped by intrathymic selection events to generate a peripheral T cell pool of self-MH restricted, non-autoaggressive T cells. Post-thymic interaction of alpha-beta TR with the pMH complexes shapes TR structural and functional avidity. The polypeptide is T cell receptor alpha variable 5 (Homo sapiens (Human)).